The following is a 139-amino-acid chain: Histone H3.3 type a (139 aa).

The interval Met1 to His43 is disordered. The residue at position 5 (Lys5) is an N6,N6,N6-trimethyllysine; by set1; alternate. Lys5 is subject to N6,N6-dimethyllysine; by set1; alternate. 2 positions are modified to N6-acetyllysine; alternate: Lys5 and Lys10. The residue at position 5 (Lys5) is an N6-methyllysine; by set1; alternate. An N6,N6,N6-trimethyllysine; alternate modification is found at Lys10. An N6,N6-dimethyllysine; alternate modification is found at Lys10. At Lys10 the chain carries N6-methyllysine; alternate. Ser11 bears the Phosphoserine mark. An N6-acetyllysine modification is found at Lys15. Residues Val16–His27 show a composition bias toward basic residues. Lys19, Lys24, Lys28, and Lys40 each carry N6-acetyllysine; alternate. Lys19, Lys24, Lys28, and Lys40 each carry N6-methyllysine; alternate. Residues Lys28 and Lys40 each carry the N6,N6,N6-trimethyllysine; alternate modification. An N6,N6-dimethyllysine; alternate mark is found at Lys28 and Lys40. An N6-acetyllysine modification is found at Lys60. Lys83 bears the N6,N6,N6-trimethyllysine; alternate mark. An N6,N6-dimethyllysine; alternate modification is found at Lys83. An N6-methyllysine; alternate modification is found at Lys83.

Belongs to the histone H3 family. In terms of assembly, the nucleosome is a histone octamer containing two molecules each of H2A, H2B, H3 and H4 assembled in one H3-H4 heterotetramer and two H2A-H2B heterodimers. The octamer wraps approximately 147 bp of DNA. Post-translationally, acetylation is generally linked to gene activation. Different methylation states of H3K4 mark distinct developmental phases. H3K4me2 is associated with euchromatic regions. H3K4me3 is a mark of active chromatin. set1 is responsible for all mono-, di- and tri-methylation of H3K4. H3K4me facilitates subsequent acetylation of H3 and H4. Methylation at H3K9 and H3K27 are linked to gene repression. In terms of processing, H3S10ph, which is linked to gene activation, prevents methylation at H3K9 but facilitates acetylation of H3 and H4.

It is found in the nucleus. Its subcellular location is the chromosome. Functionally, core component of nucleosome. Nucleosomes wrap and compact DNA into chromatin, limiting DNA accessibility to the cellular machineries which require DNA as a template. Histones thereby play a central role in transcription regulation, DNA repair, DNA replication and chromosomal stability. DNA accessibility is regulated via a complex set of post-translational modifications of histones, also called histone code, and nucleosome remodeling. The polypeptide is Histone H3.3 type a (H3a) (Dictyostelium discoideum (Social amoeba)).